The following is a 295-amino-acid chain: 4-diphosphocytidyl-2-C-methyl-D-erythritol kinase (295 aa).

Residue Lys10 is part of the active site. Position 97–107 (Pro97–Ser107) interacts with ATP. The active site involves Asp139.

The protein belongs to the GHMP kinase family. IspE subfamily. Homodimer.

The enzyme catalyses 4-CDP-2-C-methyl-D-erythritol + ATP = 4-CDP-2-C-methyl-D-erythritol 2-phosphate + ADP + H(+). The protein operates within isoprenoid biosynthesis; isopentenyl diphosphate biosynthesis via DXP pathway; isopentenyl diphosphate from 1-deoxy-D-xylulose 5-phosphate: step 3/6. Its function is as follows. Catalyzes the phosphorylation of the position 2 hydroxy group of 4-diphosphocytidyl-2C-methyl-D-erythritol. The sequence is that of 4-diphosphocytidyl-2-C-methyl-D-erythritol kinase from Blochmanniella pennsylvanica (strain BPEN).